Reading from the N-terminus, the 367-residue chain is Probable butyrate kinase (367 aa).

Belongs to the acetokinase family.

Its subcellular location is the cytoplasm. The catalysed reaction is butanoate + ATP = butanoyl phosphate + ADP. This is Probable butyrate kinase from Bacillus cereus (strain B4264).